The sequence spans 95 residues: Pancreatic polypeptide prohormone (95 aa).

The N-terminal stretch at 1 to 29 (MAAARLCLSLLLLSTCVALLLQPLLGAQG) is a signal peptide. A Tyrosine amide modification is found at Y65. Positions 89 to 95 (ELSPLDL) are excised as a propeptide.

The protein belongs to the NPY family.

The protein localises to the secreted. Its function is as follows. Hormone secreted by pancreatic cells that acts as a regulator of pancreatic and gastrointestinal functions probably by signaling through the G protein-coupled receptor NPY4R2. This Homo sapiens (Human) protein is Pancreatic polypeptide prohormone.